The chain runs to 215 residues: Pyrrolidone-carboxylate peptidase (215 aa).

Catalysis depends on residues glutamate 80, cysteine 143, and histidine 167.

The protein belongs to the peptidase C15 family. As to quaternary structure, homotetramer.

The protein resides in the cytoplasm. It carries out the reaction Release of an N-terminal pyroglutamyl group from a polypeptide, the second amino acid generally not being Pro.. Its function is as follows. Removes 5-oxoproline from various penultimate amino acid residues except L-proline. The chain is Pyrrolidone-carboxylate peptidase from Bacillus cereus (strain 03BB102).